The following is a 578-amino-acid chain: Glutathione hydrolase 2 (578 aa).

The N-terminal stretch at 1–26 (MNSFMSLVRTATIALLLIAFLQNANA) is a signal peptide. N-linked (GlcNAc...) asparagine glycosylation occurs at Asn-94. Arg-103 contacts L-glutamate. 2 N-linked (GlcNAc...) asparagine glycosylation sites follow: Asn-176 and Asn-227. Thr-374 acts as the Nucleophile in catalysis. L-glutamate-binding positions include Thr-392, Asn-394, Glu-413, Asp-416, 446–447 (SS), and 467–468 (GG). Asn-511 is a glycosylation site (N-linked (GlcNAc...) asparagine).

This sequence belongs to the gamma-glutamyltransferase family. Expressed in roots, immature trichomes and pollen. In developing siliques, specifically expressed in the embryo, endosperm, outer integument and a small portion of the funiculus.

The protein localises to the secreted. The protein resides in the extracellular space. Its subcellular location is the apoplast. The enzyme catalyses an N-terminal (5-L-glutamyl)-[peptide] + an alpha-amino acid = 5-L-glutamyl amino acid + an N-terminal L-alpha-aminoacyl-[peptide]. It catalyses the reaction glutathione + H2O = L-cysteinylglycine + L-glutamate. It carries out the reaction an S-substituted glutathione + H2O = an S-substituted L-cysteinylglycine + L-glutamate. The protein operates within sulfur metabolism; glutathione metabolism. Its function is as follows. May be required for glutathione transport into developing seeds. The sequence is that of Glutathione hydrolase 2 (GGT2) from Arabidopsis thaliana (Mouse-ear cress).